Reading from the N-terminus, the 705-residue chain is Polyribonucleotide nucleotidyltransferase (705 aa).

The Mg(2+) site is built by aspartate 492 and aspartate 498. The KH domain occupies 559-618 (PLMITMKVSPDKIRHIIGPGGKIINKIIDETGVEIDIDDDGSVYILAQDQESGNRAKEII). One can recognise an S1 motif domain in the interval 628–696 (GDIYEGRVKK…ELGRINLSRK (69 aa)).

The protein belongs to the polyribonucleotide nucleotidyltransferase family. Mg(2+) serves as cofactor.

It localises to the cytoplasm. It catalyses the reaction RNA(n+1) + phosphate = RNA(n) + a ribonucleoside 5'-diphosphate. Involved in mRNA degradation. Catalyzes the phosphorolysis of single-stranded polyribonucleotides processively in the 3'- to 5'-direction. In Halothermothrix orenii (strain H 168 / OCM 544 / DSM 9562), this protein is Polyribonucleotide nucleotidyltransferase.